The sequence spans 255 residues: MKTWQYQYQLFCLAVSFFSRLPVPKSTPYSDERMNQAGRYFALVGTLLGLLCVLVYAFASLFFPYQVAIVLMMAFSLLLTGAFHEDGLTDMADGIGGGMTLDKRLTIMKDSRIGTYGSATLTMALIGKFVFLTTLARQPDFGLMIVVAYTLSRAVAATLIYDMPYVSDSDTSKSKPLANAQSSTELAILILTGVLAAISLGLGVGLLLILFAILFRWAFKRWLLARLGGFTGDCLGGAQQLMELGIYLVLIAVVQ.

Helical transmembrane passes span 43-63 (LVGTLLGLLCVLVYAFASLFF), 64-84 (PYQVAIVLMMAFSLLLTGAFH), 113-133 (IGTYGSATLTMALIGKFVFLT), 141-161 (FGLMIVVAYTLSRAVAATLIY), 195-215 (LAAISLGLGVGLLLILFAILF), and 234-254 (CLGGAQQLMELGIYLVLIAVV).

The protein belongs to the CobS family. It depends on Mg(2+) as a cofactor.

The protein resides in the cell inner membrane. The catalysed reaction is alpha-ribazole + adenosylcob(III)inamide-GDP = adenosylcob(III)alamin + GMP + H(+). It carries out the reaction alpha-ribazole 5'-phosphate + adenosylcob(III)inamide-GDP = adenosylcob(III)alamin 5'-phosphate + GMP + H(+). It functions in the pathway cofactor biosynthesis; adenosylcobalamin biosynthesis; adenosylcobalamin from cob(II)yrinate a,c-diamide: step 7/7. Joins adenosylcobinamide-GDP and alpha-ribazole to generate adenosylcobalamin (Ado-cobalamin). Also synthesizes adenosylcobalamin 5'-phosphate from adenosylcobinamide-GDP and alpha-ribazole 5'-phosphate. This is Adenosylcobinamide-GDP ribazoletransferase from Vibrio vulnificus (strain CMCP6).